We begin with the raw amino-acid sequence, 116 residues long: Large ribosomal subunit protein uL22 (116 aa).

It belongs to the universal ribosomal protein uL22 family. Part of the 50S ribosomal subunit.

In terms of biological role, this protein binds specifically to 23S rRNA; its binding is stimulated by other ribosomal proteins, e.g. L4, L17, and L20. It is important during the early stages of 50S assembly. It makes multiple contacts with different domains of the 23S rRNA in the assembled 50S subunit and ribosome. Functionally, the globular domain of the protein is located near the polypeptide exit tunnel on the outside of the subunit, while an extended beta-hairpin is found that lines the wall of the exit tunnel in the center of the 70S ribosome. The polypeptide is Large ribosomal subunit protein uL22 (Sulfurihydrogenibium sp. (strain YO3AOP1)).